A 369-amino-acid polypeptide reads, in one-letter code: MTVTGIVAEFNPFHNGHKYLLEQAQGIKVIAMSGNFMQRGEPAIVDKWTRAQMALENGADLVIELPFLVSVQSADYFASGAVSILARLGVDNLCFGTEEMLDYDRIGDIYVNKKEEMEAFLKKQSDSLSYPQKTQAMWQEFAGIAFSGQTPNHILGLAYTKAASQNGIRLNPIQRQGAGYHSSEKTEIFASATSLRKHQSDRFFVEKGMPNSDLFLNSPQVVWQDYFSLLKYQIMTHSDLTQIYQVNEEIANRIKSQIRYVETVDELVDKVATKRYTKARIRRLLTYILINAVESPIPNAIHVLGFTQKGQQHLKSVKKSVDIVTRIGSQTWDSLTQRADSVYQMGNANIAEQTWGRIPFHQSVSQSDL.

ATP-binding positions include 7-20 (VAEF…HKYL), Gly96, Asn152, and Arg175.

The protein belongs to the TmcAL family.

Its subcellular location is the cytoplasm. The enzyme catalyses cytidine(34) in elongator tRNA(Met) + acetate + ATP = N(4)-acetylcytidine(34) in elongator tRNA(Met) + AMP + diphosphate. Functionally, catalyzes the formation of N(4)-acetylcytidine (ac(4)C) at the wobble position of elongator tRNA(Met), using acetate and ATP as substrates. First activates an acetate ion to form acetyladenylate (Ac-AMP) and then transfers the acetyl group to tRNA to form ac(4)C34. This is tRNA(Met) cytidine acetate ligase from Streptococcus agalactiae serotype III (strain NEM316).